Here is a 101-residue protein sequence, read N- to C-terminus: Small ribosomal subunit protein uS14 (101 aa).

This sequence belongs to the universal ribosomal protein uS14 family. As to quaternary structure, part of the 30S ribosomal subunit. Contacts proteins S3 and S10.

Functionally, binds 16S rRNA, required for the assembly of 30S particles and may also be responsible for determining the conformation of the 16S rRNA at the A site. This Xylella fastidiosa (strain 9a5c) protein is Small ribosomal subunit protein uS14.